We begin with the raw amino-acid sequence, 428 residues long: Enolase 1 (428 aa).

Residues 38 to 58 (EVPSGASTGENEAVELRDGGS) form a disordered region. Residue Gln163 participates in (2R)-2-phosphoglycerate binding. Catalysis depends on Glu205, which acts as the Proton donor. The Mg(2+) site is built by Asp242, Glu286, and Asp313. (2R)-2-phosphoglycerate-binding residues include Lys338, Arg367, Ser368, and Lys389. The active-site Proton acceptor is Lys338.

Belongs to the enolase family. Mg(2+) serves as cofactor.

It localises to the cytoplasm. The protein localises to the secreted. Its subcellular location is the cell surface. It catalyses the reaction (2R)-2-phosphoglycerate = phosphoenolpyruvate + H2O. It participates in carbohydrate degradation; glycolysis; pyruvate from D-glyceraldehyde 3-phosphate: step 4/5. Its function is as follows. Catalyzes the reversible conversion of 2-phosphoglycerate (2-PG) into phosphoenolpyruvate (PEP). It is essential for the degradation of carbohydrates via glycolysis. The chain is Enolase 1 from Lactobacillus gasseri (strain ATCC 33323 / DSM 20243 / BCRC 14619 / CIP 102991 / JCM 1131 / KCTC 3163 / NCIMB 11718 / NCTC 13722 / AM63).